The following is a 122-amino-acid chain: Secreted RxLR effector protein RXLR-C251 (122 aa).

Positions 1 to 24 (MRFFYKLALMTTVASLACSDTALA) are cleaved as a signal peptide. The short motif at 48–51 (RSLR) is the RxLR element.

The protein belongs to the RxLR effector family.

It localises to the secreted. The protein resides in the host cytoplasm. Its subcellular location is the host nucleus. Functionally, secreted effector that does not suppress pattern-triggered immunity (PTI) in plant host. In Plasmopara halstedii (Downy mildew of sunflower), this protein is Secreted RxLR effector protein RXLR-C251.